Consider the following 96-residue polypeptide: Conantokin Rl-B (96 aa).

Positions 1–21 are cleaved as a signal peptide; it reads MQLYTYLYLLVPLVTFHLILG. Positions 22–78 are excised as a propeptide; that stretch reads TGTLDHGDALTERRSTDATALKPEPVLLQKSSARSTNDNGKDTQMKRILKKRGNKAR. Positions 51–96 are disordered; sequence KSSARSTNDNGKDTQMKRILKKRGNKARGEEELAEKAPEFARELAN. Residues 77–96 show a composition bias toward basic and acidic residues; that stretch reads ARGEEELAEKAPEFARELAN. Position 81 (Glu81) interacts with a divalent metal cation. Glu81, Glu82, and Glu85 each carry 4-carboxyglutamate. Glu85 lines the a divalent metal cation pocket. Pro88 is modified (4-hydroxyproline). Residues Glu89 and Glu93 each contribute to the a divalent metal cation site. Residues Glu89 and Glu93 each carry the 4-carboxyglutamate modification. Asparagine amide is present on Asn96.

The protein belongs to the conotoxin B superfamily. Requires Ca(2+) as cofactor. Mg(2+) serves as cofactor. Post-translationally, hydroxylation of Pro-88 is important for NR2B/GRIN2B NMDA receptor selectivity. Removal of hydroxylation does not change global NMDA receptor antagonism (tested on WT neurons), but it decreases the inhibitory potency on NR2B/GRIN2B NMDA receptors and increases the inhibitory potency on NR2A/GRIN2A NMDA receptors. Hydroxylation of Pro-88 locally disrupts a small region of the divalent cation-induced alpha-helix but does not destabilize the entire helix. As to expression, expressed by the venom duct.

It is found in the secreted. Its function is as follows. Conantokins inhibit N-methyl-D-aspartate (NMDA) receptors. This toxin has antagonist activity on the NR2B/GRIN2B subunit (IC(50)=0.1 uM). In vivo, when delivered into the brain, is active has anticonvulsant activity in the model of epilepsy in mice. The sequence is that of Conantokin Rl-B from Conus rolani (Cone snail).